The sequence spans 264 residues: MSSTLYRRQLLKLLGMSVLGTSFSSCVTSPARAKTVNWGYIGKVGPEHWGELSPDFALCQIGRKQTPIDLQIADVKDVHSSSQDLLVTNYQPTALHLINNGKTVQVNYQPGSYLKYAHQKFELLQFHFHHFSEHRVDGKLYDMELHLVHRSKSGDLAVMGIFLQAGAFNPTLQIIWDATPQNQGTDKRIEDINIDASQFLPAQHRFFTYSGSLTTPPCSENVLWCVMATPIEASPAQIAKFSQMFPQNARPVQPLNDRLVIEAI.

A signal peptide (tat-type signal) is located at residues 1 to 33 (MSSTLYRRQLLKLLGMSVLGTSFSSCVTSPARA). Residues 36–264 (VNWGYIGKVG…LNDRLVIEAI (229 aa)) enclose the Alpha-carbonic anhydrase domain. Zn(2+) contacts are provided by His127, His129, and His146. 214 to 215 (TT) lines the substrate pocket.

The protein belongs to the alpha-carbonic anhydrase family. Requires Zn(2+) as cofactor. Post-translationally, predicted to be exported by the Tat system. The position of the signal peptide cleavage has not been experimentally proven.

The enzyme catalyses hydrogencarbonate + H(+) = CO2 + H2O. Functionally, reversible hydration of carbon dioxide. This chain is Carbonic anhydrase (ecaA), found in Nostoc sp. (strain PCC 7120 / SAG 25.82 / UTEX 2576).